The following is a 244-amino-acid chain: MALLPVVVFLITMLLPCVLTNGKDPAFTALITTQSQVQNEIINKHNQLRKSVTPPASNMLKMEWSREAAVNAQKWANRCTLVHSNPDDRKTSTKCGENLYMSSDPSSWSDAIQSWFDESQDFTFGVGPKSHNAVVGHYTQLVWYSSYLVGCGIAYCPNQDSLKYYYVCQYCPAGNNVYTKNTPYKQGIPCASCPGHCENGLCTNSCEYEDLLSNCESLKNTAGCEHQLLVEKCKATCRCEDKIY.

A signal peptide spans 1–21 (MALLPVVVFLITMLLPCVLTN). The SCP domain maps to 43–170 (NKHNQLRKSV…SLKYYYVCQY (128 aa)). Cystine bridges form between Cys190/Cys197, Cys193/Cys202, Cys206/Cys239, Cys215/Cys233, and Cys224/Cys237. Residues 206 to 239 (CEYEDLLSNCESLKNTAGCEHQLLVEKCKATCRC) form the ShKT domain.

Belongs to the CRISP family. In terms of assembly, interacts with NSUN4 isoform 3. In terms of tissue distribution, testis.

It localises to the secreted. Functionally, may regulate some ion channels' activity and thereby regulate calcium fluxes during sperm capacitation. The sequence is that of Cysteine-rich secretory protein 2 (CRISP2) from Cavia porcellus (Guinea pig).